The chain runs to 120 residues: NAD(P)H-quinone oxidoreductase subunit 3, chloroplastic (120 aa).

3 consecutive transmembrane segments (helical) span residues 9–29, 64–84, and 88–108; these read IFWA…IISG, MFAL…PWAM, and VLGV…IVGS.

Belongs to the complex I subunit 3 family. In terms of assembly, NDH is composed of at least 16 different subunits, 5 of which are encoded in the nucleus.

Its subcellular location is the plastid. The protein resides in the chloroplast thylakoid membrane. It catalyses the reaction a plastoquinone + NADH + (n+1) H(+)(in) = a plastoquinol + NAD(+) + n H(+)(out). It carries out the reaction a plastoquinone + NADPH + (n+1) H(+)(in) = a plastoquinol + NADP(+) + n H(+)(out). NDH shuttles electrons from NAD(P)H:plastoquinone, via FMN and iron-sulfur (Fe-S) centers, to quinones in the photosynthetic chain and possibly in a chloroplast respiratory chain. The immediate electron acceptor for the enzyme in this species is believed to be plastoquinone. Couples the redox reaction to proton translocation, and thus conserves the redox energy in a proton gradient. The protein is NAD(P)H-quinone oxidoreductase subunit 3, chloroplastic of Lemna minor (Common duckweed).